The primary structure comprises 332 residues: MTQESLLLLDRIDSDDSYASLRNDQEFWEPLARRALEELGLPVPPVLRVPGESTNPVLVGEPDPVIKLFGEHWCGPESLASESEAYAVLADAPVPVPRLLGRGELRPGTGAWPWPYLVMSRMTGTTWRSAMDGTTDRNALLALARELGRVLGRLHRVPLTGNTVLTPHSEVFPELLRERRAATVEDHRGWGYLSPRLLDRLEDWLPDVDTLLAGREPRFVHGDLHGTNIFVDLAATEVTGIVDFTDVYAGDSRYSLVQLHLNAFRGDREILAALLDGAQWKRTEDFARELLAFTFLHDFEVFEETPLDLSGFTDPEELAQFLWGPPDTAPGA.

The active-site Proton acceptor is Asp223.

This sequence belongs to the aminoglycoside phosphotransferase family.

It catalyses the reaction hygromycin B + ATP = 7''-O-phosphohygromycin B + ADP + H(+). The aminoglycoside phosphotransferases achieve inactivation of their antibiotic substrates by phosphorylation. In Streptomyces hygroscopicus, this protein is Hygromycin-B 7''-O-kinase (hyg).